The following is a 771-amino-acid chain: MAFDWFWKAMGSSPKKNQKKSRAVVAQADSSRYSGLSDAELRDAASDVVTEQSTSEDGHHFGGQVDDAPALLAILREAASRTLNMEPFDVQMQGTYRLLHGDVVEMATGEGKTLAGAMAAVGFALQGKRVHVITVNSYLAGRDNDWMGPMFDFFGLTHGAIREDLTADQRRDIYSRDVIFGAINELGFDVLRDQLITRRADQVRTPADVAVIDEADSVMVDEALVPLVLAGSEPGPAPAGRITDLVKRMEEDKHFHVSEDHRNVFLTDEGAAFVEKELGVDSLYEDEGELLVQVNVALHAEHLLIRDVHYIVRDGKVALIDGSRGRVAELQRWPDGLQAAVEAKEGLDVTDGGRILDQITIQALVGMYPEVCGMTGTALAAGDQLRQFYNLQVSVIEPNVPNIRFDEADRVYVSAAERNDAVVKHIVEVQKTGQPQLVGTQDVAESEELAEALLSAGVECSVLNAKNHEAEAAVVAEAGRPGRVTVSTQMAGRGTDIKLGGTDEAEHDEVVETGGLHVVGVGRFRSQRLDNQLRGRAGRQGDPGSSLFFVSLEDDVVAVGGAGEELQAQPEEDGLLPQKKVQQFVDHCQRVTEGQMLDIHATTWKYNKLIKDQRDIVNDRRDTLLDTAAAWDDLSYHNVDRAAELKKQGISEEVLEQAAREIMLFHLDNEWSEHLAYLDDVRESIHLRAIARESPIDEFHRMSIAAFGELAERAVNKARETFDEVEITSDGAQLGEMGLHKPSATWTYMVNDNPLSSSGGSVMGSIVQMFR.

ATP contacts are provided by residues Gln-91, 109 to 113, and Asp-496; that span reads GEGKT.

This sequence belongs to the SecA family. As to quaternary structure, monomer and homodimer. Part of the essential Sec protein translocation apparatus which comprises SecA, SecYEG and auxiliary proteins SecDF. Other proteins may also be involved.

The protein resides in the cell membrane. It localises to the cytoplasm. The catalysed reaction is ATP + H2O + cellular proteinSide 1 = ADP + phosphate + cellular proteinSide 2.. In terms of biological role, part of the Sec protein translocase complex. Interacts with the SecYEG preprotein conducting channel. Has a central role in coupling the hydrolysis of ATP to the transfer of proteins into and across the cell membrane, serving as an ATP-driven molecular motor driving the stepwise translocation of polypeptide chains across the membrane. The polypeptide is Protein translocase subunit SecA 2 (Corynebacterium jeikeium (strain K411)).